The following is a 387-amino-acid chain: Formate-dependent phosphoribosylglycinamide formyltransferase (387 aa).

N(1)-(5-phospho-beta-D-ribosyl)glycinamide is bound by residues E21–L22 and E81. ATP-binding positions include R113, K154, S159 to Q164, E193 to V196, and E201. An ATP-grasp domain is found at V118–L306. Residues E265 and E277 each coordinate Mg(2+). N(1)-(5-phospho-beta-D-ribosyl)glycinamide-binding positions include D284, K352, and R359–R360.

Belongs to the PurK/PurT family. As to quaternary structure, homodimer.

It catalyses the reaction N(1)-(5-phospho-beta-D-ribosyl)glycinamide + formate + ATP = N(2)-formyl-N(1)-(5-phospho-beta-D-ribosyl)glycinamide + ADP + phosphate + H(+). It participates in purine metabolism; IMP biosynthesis via de novo pathway; N(2)-formyl-N(1)-(5-phospho-D-ribosyl)glycinamide from N(1)-(5-phospho-D-ribosyl)glycinamide (formate route): step 1/1. Its function is as follows. Involved in the de novo purine biosynthesis. Catalyzes the transfer of formate to 5-phospho-ribosyl-glycinamide (GAR), producing 5-phospho-ribosyl-N-formylglycinamide (FGAR). Formate is provided by PurU via hydrolysis of 10-formyl-tetrahydrofolate. This chain is Formate-dependent phosphoribosylglycinamide formyltransferase, found in Sulfurovum sp. (strain NBC37-1).